Reading from the N-terminus, the 370-residue chain is Allatostatins (370 aa).

Positions 1–27 (MSGPRTCFCLPSALVLVLLSLSTSALG) are cleaved as a signal peptide. A propeptide spanning residues 28 to 65 (TAPEPSGVHEESPAGGGTDLLPHPEDLSASDNPDLEFV) is cleaved from the precursor. Positions 29–58 (APEPSGVHEESPAGGGTDLLPHPEDLSASD) are disordered. Leucine amide is present on residues leucine 73, leucine 94, leucine 105, and leucine 117. Residues 121 to 151 (DYDYYGEEDEDDQQAIGDEDIEESDVGDLMD) constitute a propeptide that is removed on maturation. Leucine amide occurs at positions 161, 172, 188, 200, 213, and 232. The propeptide occupies 236–251 (SDDIDFRELEEKFAED). Leucine 264 carries the leucine amide modification. Positions 268–345 (EVEPSELEAV…ITPEEFSRMV (78 aa)) are excised as a propeptide. The interval 273–298 (ELEAVRNEEKDNSSVHDKKNNTNDMH) is disordered. Leucine 353 bears the Leucine amide mark. Isoleucine 364 bears the Isoleucine amide mark. The propeptide occupies 368 to 370 (SER).

The protein belongs to the allatostatin family. As to expression, brain, subesophageal ganglion and corpus allatum.

Its subcellular location is the secreted. Its function is as follows. Neuropeptide inhibitors of juvenile hormone synthesis and gut muscle contraction. The polypeptide is Allatostatins (Diploptera punctata (Pacific beetle cockroach)).